A 104-amino-acid polypeptide reads, in one-letter code: Large ribosomal subunit protein uL24 (104 aa).

It belongs to the universal ribosomal protein uL24 family. In terms of assembly, part of the 50S ribosomal subunit.

One of two assembly initiator proteins, it binds directly to the 5'-end of the 23S rRNA, where it nucleates assembly of the 50S subunit. Its function is as follows. One of the proteins that surrounds the polypeptide exit tunnel on the outside of the subunit. This is Large ribosomal subunit protein uL24 from Shewanella halifaxensis (strain HAW-EB4).